A 296-amino-acid polypeptide reads, in one-letter code: MSKYFISAPAKINLFLHIVGKAPCGYHLIESVFAFVELYDVLEFDIGSRNRGIRFLKPSCINRRDNTIQRAIGHLVRRCSPGTTDNVYVKVLKNIPVSSGLAGGSADAAAAINLLSKLWGINEKETERVAFRVGSDVPVCLESKTAFVAGMGDVVELLEDSFLPRHVILVGPKVELSTKSVFDMYNPKAFSPSIGKLPGNSEDWLSLLKEARNDLTEVSVELVPEIRIILDVLGSLDGCCFSRMSGSGAMSFAIFEDENSAELATRYLRRNYPDWFIFKTRIIRSSDQEDNNMGNL.

K11 is a catalytic residue. 96–106 (PVSSGLAGGSA) lines the ATP pocket. D136 is an active-site residue.

This sequence belongs to the GHMP kinase family. IspE subfamily.

The catalysed reaction is 4-CDP-2-C-methyl-D-erythritol + ATP = 4-CDP-2-C-methyl-D-erythritol 2-phosphate + ADP + H(+). It participates in isoprenoid biosynthesis; isopentenyl diphosphate biosynthesis via DXP pathway; isopentenyl diphosphate from 1-deoxy-D-xylulose 5-phosphate: step 3/6. Functionally, catalyzes the phosphorylation of the position 2 hydroxy group of 4-diphosphocytidyl-2C-methyl-D-erythritol. The sequence is that of 4-diphosphocytidyl-2-C-methyl-D-erythritol kinase from Anaplasma phagocytophilum (strain HZ).